Reading from the N-terminus, the 429-residue chain is Glutamate-1-semialdehyde 2,1-aminomutase (429 aa).

Position 272 is an N6-(pyridoxal phosphate)lysine (lysine 272).

The protein belongs to the class-III pyridoxal-phosphate-dependent aminotransferase family. HemL subfamily. Pyridoxal 5'-phosphate serves as cofactor.

It localises to the cytoplasm. The enzyme catalyses (S)-4-amino-5-oxopentanoate = 5-aminolevulinate. The protein operates within porphyrin-containing compound metabolism; protoporphyrin-IX biosynthesis; 5-aminolevulinate from L-glutamyl-tRNA(Glu): step 2/2. The sequence is that of Glutamate-1-semialdehyde 2,1-aminomutase from Methanothrix thermoacetophila (strain DSM 6194 / JCM 14653 / NBRC 101360 / PT) (Methanosaeta thermophila).